We begin with the raw amino-acid sequence, 111 residues long: Ribonuclease P protein component (111 aa).

The protein belongs to the RnpA family. Consists of a catalytic RNA component (M1 or rnpB) and a protein subunit.

The catalysed reaction is Endonucleolytic cleavage of RNA, removing 5'-extranucleotides from tRNA precursor.. Its function is as follows. RNaseP catalyzes the removal of the 5'-leader sequence from pre-tRNA to produce the mature 5'-terminus. It can also cleave other RNA substrates such as 4.5S RNA. The protein component plays an auxiliary but essential role in vivo by binding to the 5'-leader sequence and broadening the substrate specificity of the ribozyme. This Alkaliphilus metalliredigens (strain QYMF) protein is Ribonuclease P protein component.